The primary structure comprises 309 residues: Olfactory receptor 8U9 (309 aa).

Residues 1–28 (MTQINCTQVTEFILVGLTDRQELKMPLF) lie on the Extracellular side of the membrane. Asparagine 5 carries an N-linked (GlcNAc...) asparagine glycan. Residues 29-49 (VLFLSIYLFTVVGNLGLILLI) form a helical membrane-spanning segment. The Cytoplasmic portion of the chain corresponds to 50-56 (RTDEKLN). Residues 57-77 (TPMYFFLSNLAFVDFCYSSVI) traverse the membrane as a helical segment. Over 78–97 (TPKMLGNFLYKQNSISFNAC) the chain is Extracellular. Cysteine 97 and cysteine 179 form a disulfide bridge. A helical transmembrane segment spans residues 98 to 118 (AAQLGCFLAFMTAECLLLASM). Residues 119–143 (AYDRYVAICNPLMYMVVMSPGICIQ) lie on the Cytoplasmic side of the membrane. A helical membrane pass occupies residues 144–164 (LVAAPHSYSILVALFHTILTF). Residues 165–204 (RLSYCHSNIVNHFYCDDMPLLRLTCSDTRFKQLWIFACAG) lie on the Extracellular side of the membrane. The helical transmembrane segment at 205-225 (IMFISSLLIVFVSYMFIISAI) threads the bilayer. The Cytoplasmic portion of the chain corresponds to 226 to 239 (LRMHSAEGRQKAFS). A helical transmembrane segment spans residues 240 to 260 (TCGSHMLAVTIFYGTLIFMYL). At 261–272 (QPSSSHALDTDK) the chain is on the extracellular side. Residues 273 to 293 (MASVFYTVIIPMLNPLIYSLQ) form a helical membrane-spanning segment. Residues 294 to 309 (NKEVKEALKKIIINKN) lie on the Cytoplasmic side of the membrane.

It belongs to the G-protein coupled receptor 1 family.

The protein resides in the cell membrane. In terms of biological role, odorant receptor. The chain is Olfactory receptor 8U9 (OR8U9) from Homo sapiens (Human).